We begin with the raw amino-acid sequence, 180 residues long: Large ribosomal subunit protein uL5 (180 aa).

It belongs to the universal ribosomal protein uL5 family. Part of the 50S ribosomal subunit; part of the 5S rRNA/L5/L18/L25 subcomplex. Contacts the 5S rRNA and the P site tRNA. Forms a bridge to the 30S subunit in the 70S ribosome.

In terms of biological role, this is one of the proteins that bind and probably mediate the attachment of the 5S RNA into the large ribosomal subunit, where it forms part of the central protuberance. In the 70S ribosome it contacts protein S13 of the 30S subunit (bridge B1b), connecting the 2 subunits; this bridge is implicated in subunit movement. Contacts the P site tRNA; the 5S rRNA and some of its associated proteins might help stabilize positioning of ribosome-bound tRNAs. The protein is Large ribosomal subunit protein uL5 of Chloroflexus aggregans (strain MD-66 / DSM 9485).